A 294-amino-acid polypeptide reads, in one-letter code: 4-hydroxy-tetrahydrodipicolinate synthase (294 aa).

A pyruvate-binding site is contributed by Thr-45. The active-site Proton donor/acceptor is the Tyr-133. Catalysis depends on Lys-161, which acts as the Schiff-base intermediate with substrate. Residue Ile-203 coordinates pyruvate.

This sequence belongs to the DapA family. Homotetramer; dimer of dimers.

The protein localises to the cytoplasm. The enzyme catalyses L-aspartate 4-semialdehyde + pyruvate = (2S,4S)-4-hydroxy-2,3,4,5-tetrahydrodipicolinate + H2O + H(+). It functions in the pathway amino-acid biosynthesis; L-lysine biosynthesis via DAP pathway; (S)-tetrahydrodipicolinate from L-aspartate: step 3/4. Its function is as follows. Catalyzes the condensation of (S)-aspartate-beta-semialdehyde [(S)-ASA] and pyruvate to 4-hydroxy-tetrahydrodipicolinate (HTPA). In Shewanella sp. (strain W3-18-1), this protein is 4-hydroxy-tetrahydrodipicolinate synthase.